The sequence spans 334 residues: Probable quinone oxidoreductase (334 aa).

Belongs to the zinc-containing alcohol dehydrogenase family. Quinone oxidoreductase subfamily.

The catalysed reaction is 2 a quinone + NADPH + H(+) = 2 a 1,4-benzosemiquinone + NADP(+). This Saccharomyces cerevisiae (strain ATCC 204508 / S288c) (Baker's yeast) protein is Probable quinone oxidoreductase (ZTA1).